The following is a 266-amino-acid chain: Undecaprenyl-diphosphatase 3 (266 aa).

8 helical membrane passes run 4 to 24 (IEAF…FLPI), 43 to 63 (SGRA…CWLY), 86 to 106 (FSVL…VDFI), 109 to 129 (VLFS…IIFW), 145 to 165 (ITFK…IPGT), 186 to 206 (TEFS…YDLL), 219 to 239 (NIGL…KALV), and 246 to 266 (TLRV…FVML).

The protein belongs to the UppP family.

Its subcellular location is the cell inner membrane. The enzyme catalyses di-trans,octa-cis-undecaprenyl diphosphate + H2O = di-trans,octa-cis-undecaprenyl phosphate + phosphate + H(+). In terms of biological role, catalyzes the dephosphorylation of undecaprenyl diphosphate (UPP). Confers resistance to bacitracin. In Acinetobacter baylyi (strain ATCC 33305 / BD413 / ADP1), this protein is Undecaprenyl-diphosphatase 3.